The sequence spans 872 residues: UPF0182 protein Noc_0961 (872 aa).

A run of 7 helical transmembrane segments spans residues 8–28, 56–76, 109–129, 159–179, 207–227, 254–274, and 282–302; these read FLIL…AGFE, LVVF…NFWV, SLWI…WPLF, LFSF…FLLL, WHLS…FFLQ, PFIW…LLFI, and TLAV…FHFL.

Belongs to the UPF0182 family.

The protein localises to the cell membrane. The polypeptide is UPF0182 protein Noc_0961 (Nitrosococcus oceani (strain ATCC 19707 / BCRC 17464 / JCM 30415 / NCIMB 11848 / C-107)).